The primary structure comprises 217 residues: Probable transaldolase (217 aa).

Catalysis depends on Lys83, which acts as the Schiff-base intermediate with substrate.

It belongs to the transaldolase family. Type 3B subfamily.

Its subcellular location is the cytoplasm. It carries out the reaction D-sedoheptulose 7-phosphate + D-glyceraldehyde 3-phosphate = D-erythrose 4-phosphate + beta-D-fructose 6-phosphate. Its pathway is carbohydrate degradation; pentose phosphate pathway; D-glyceraldehyde 3-phosphate and beta-D-fructose 6-phosphate from D-ribose 5-phosphate and D-xylulose 5-phosphate (non-oxidative stage): step 2/3. Transaldolase is important for the balance of metabolites in the pentose-phosphate pathway. The protein is Probable transaldolase of Erythrobacter litoralis (strain HTCC2594).